Consider the following 162-residue polypeptide: Beta-lactoglobulin-3 (162 aa).

Intrachain disulfides connect Cys-66/Cys-160 and Cys-106/Cys-119.

The protein belongs to the calycin superfamily. Lipocalin family. As to quaternary structure, monomer.

It is found in the secreted. Its function is as follows. Lactoglobulin is the primary component of whey, it binds retinol and is probably involved in the transport of that molecule. This Felis catus (Cat) protein is Beta-lactoglobulin-3 (LGB3).